A 224-amino-acid polypeptide reads, in one-letter code: UPF0758 protein lmo1549 (224 aa).

The MPN domain occupies 102–224 (VVRCPEDAVK…YISLKEKGYF (123 aa)). Residues His173, His175, and Asp186 each coordinate Zn(2+). Residues 173 to 186 (HNHPSGDPTPSSED) carry the JAMM motif motif.

This sequence belongs to the UPF0758 family.

The sequence is that of UPF0758 protein lmo1549 from Listeria monocytogenes serovar 1/2a (strain ATCC BAA-679 / EGD-e).